We begin with the raw amino-acid sequence, 242 residues long: Ribonuclease 3 (242 aa).

Positions 18–146 (APAIEAKLGY…IIGAIYLDGG (129 aa)) constitute an RNase III domain. Glu-59 is a Mg(2+) binding site. Asp-63 is a catalytic residue. Residues Asp-132 and Glu-135 each coordinate Mg(2+). The active site involves Glu-135. In terms of domain architecture, DRBM spans 172 to 241 (NWKALLQDYC…AADALSRVEL (70 aa)). Residues 218–227 (RGKGTSKKEA) are compositionally biased toward basic and acidic residues. Positions 218-242 (RGKGTSKKEAQQAAAADALSRVELP) are disordered.

It belongs to the ribonuclease III family. Homodimer. The cofactor is Mg(2+).

Its subcellular location is the cytoplasm. It carries out the reaction Endonucleolytic cleavage to 5'-phosphomonoester.. In terms of biological role, digests double-stranded RNA. Involved in the processing of primary rRNA transcript to yield the immediate precursors to the large and small rRNAs (23S and 16S). Processes some mRNAs, and tRNAs when they are encoded in the rRNA operon. Processes pre-crRNA and tracrRNA of type II CRISPR loci if present in the organism. The polypeptide is Ribonuclease 3 (Protochlamydia amoebophila (strain UWE25)).